We begin with the raw amino-acid sequence, 312 residues long: MNEAPAEKQKPQQGKRFSERLPQWLRQVLPRGSVFTHTDATLKRTGLATVCEEALCPNRTHCWSRKTATYLALGDTCSRRCGFCNIDFSKNPLPPDPEEPQKIAESAKALQLKHIVLTMVARDDLEDGGASYLARIIHTLHQELPESTIEVLASDFQGNVDALHVLLDSGLTIYNHNVETVERLTPVVRHKATYRRSLFMLEQAAVYLPNLKIKSGIMVGLGEQESEVKQTLKDLADHGVRIVTIGQYLRPSRLHIPVKNYVTPETFDYYRSVGESLGLFVYAGPFVRSSFNADMVLHNLQDKQSEIAKVPR.

Basic and acidic residues predominate over residues 1–10; the sequence is MNEAPAEKQK. The interval 1 to 20 is disordered; the sequence is MNEAPAEKQKPQQGKRFSER. [4Fe-4S] cluster is bound by residues Cys51, Cys56, Cys62, Cys77, Cys81, Cys84, and Ser290. One can recognise a Radical SAM core domain in the interval 63 to 280; it reads WSRKTATYLA…RSVGESLGLF (218 aa).

This sequence belongs to the radical SAM superfamily. Lipoyl synthase family. [4Fe-4S] cluster serves as cofactor.

The protein localises to the cytoplasm. The enzyme catalyses [[Fe-S] cluster scaffold protein carrying a second [4Fe-4S](2+) cluster] + N(6)-octanoyl-L-lysyl-[protein] + 2 oxidized [2Fe-2S]-[ferredoxin] + 2 S-adenosyl-L-methionine + 4 H(+) = [[Fe-S] cluster scaffold protein] + N(6)-[(R)-dihydrolipoyl]-L-lysyl-[protein] + 4 Fe(3+) + 2 hydrogen sulfide + 2 5'-deoxyadenosine + 2 L-methionine + 2 reduced [2Fe-2S]-[ferredoxin]. The protein operates within protein modification; protein lipoylation via endogenous pathway; protein N(6)-(lipoyl)lysine from octanoyl-[acyl-carrier-protein]: step 2/2. In terms of biological role, catalyzes the radical-mediated insertion of two sulfur atoms into the C-6 and C-8 positions of the octanoyl moiety bound to the lipoyl domains of lipoate-dependent enzymes, thereby converting the octanoylated domains into lipoylated derivatives. This chain is Lipoyl synthase, found in Chlamydia felis (strain Fe/C-56) (Chlamydophila felis).